Here is an 898-residue protein sequence, read N- to C-terminus: Chloride channel protein 2 (898 aa).

Topologically, residues 1 to 90 are cytoplasmic; the sequence is MAAPAAAAVE…RCHKFLVSRV (90 aa). An essential for channel gating by both voltage and cell volume region spans residues 19–37; that stretch reads QYEQTLMYGRYTQDLGAFA. Threonine 23 is subject to Phosphothreonine. Residues 39 to 52 are modulates channel gating by both voltage and cell volume; the sequence is EEAARIRLGGPEPW. Transmembrane regions (helical) follow at residues 91 to 124 and 133 to 158; these read GEDWIFLVLLGLLMALVSWAMDYAIAACLQAQQW and LLLQYLAWVTYPVVLITFSAGFTQIL. The short motif at 164-168 is the Selectivity filter part_1 element; that stretch reads GSGIP. Residues 167–174 constitute an intramembrane region (helical); sequence IPEMKTIL. 2 consecutive transmembrane segments (helical) span residues 183 to 201 and 208 to 226; these read LTLKTFVAKVIGLTCALGS and EGPFVHIASMCAALLSKFL. The short motif at 206-210 is the Selectivity filter part_2 element; the sequence is GKEGP. 2 intramembrane regions (helical) span residues 242–254 and 258–266; these read MLAAACAVGVGCC and PIGGVLFSI. 5 helical membrane-spanning segments follow: residues 278–298, 324–352, 361–380, 432–452, and 460–483; these read YWRGFFAATFSAFIFRVLAVW, LPAFAVIGIASGFGGALFVYLNRKIVQVM, FLMRKRLLFPALVTLLISTL, ANVFLTLVIFILMKFWMSALA, and GAFMPVFVIGAAFGRLVGESMAAW. Positions 460 to 464 match the Selectivity filter part_3 motif; it reads GAFMP. The segment at residues 500–514 is an intramembrane region (helical); sequence GGYAVVGAAALAGAV. The segment at residues 515 to 516 is an intramembrane region (note=Loop between two helices); it reads TH. Positions 517 to 528 form an intramembrane region, helical; sequence TVSTAVIVFELT. An intramembrane region (note=Loop between two helices) is located at residues 529-533; the sequence is GQIAH. Residues 534–551 form a helical membrane-spanning segment; sequence ILPVMIAVILANAVAQSL. Residues 552 to 898 are Cytoplasmic-facing; the sequence is QPSLYDSIIR…SPSDSDDKCQ (347 aa). The 59-residue stretch at 587-645 folds into the CBS 1 domain; it reads MVRDVPHVALSCTFRDLRLALHRTKGRTLALVESPESMILLGSIERTQVVALLAAQLSP. Basic residues predominate over residues 647–658; it reads RRRQSKQKRRVA. The tract at residues 647 to 675 is disordered; that stretch reads RRRQSKQKRRVAHTSPPSCQESPPSPETS. A Phosphoserine modification is found at serine 710. The disordered stretch occupies residues 726-766; that stretch reads FCGSPPPEAASESEKSESSEKRKSKRVRISLASDSDLEGEM. Positions 737-746 are enriched in basic and acidic residues; the sequence is ESEKSESSEK. Serine 758 is modified (phosphoserine). Residues 790-850 enclose the CBS 2 domain; sequence IDPAPFQLVE…GSVTAQGVKV (61 aa). The Basolateral membrane sorting motif lies at 812 to 813; the sequence is LL. The disordered stretch occupies residues 856–898; that stretch reads SFRDSATSSSDTETTEVHALWGPRSRHGLPREGSPSDSDDKCQ.

Belongs to the chloride channel (TC 2.A.49) family. ClC-2/CLCN2 subfamily. Homodimer. Interacts with auxiliary subunit HEPACAM. In terms of processing, phosphorylated. Activated by dephosphorylation. In terms of tissue distribution, ubiquitously expressed.

The protein localises to the cell membrane. Its subcellular location is the basolateral cell membrane. The protein resides in the cell projection. It is found in the dendritic spine membrane. It localises to the axon. The catalysed reaction is chloride(in) = chloride(out). It carries out the reaction thiocyanate(in) = thiocyanate(out). The enzyme catalyses bromide(in) = bromide(out). It catalyses the reaction nitrate(in) = nitrate(out). The catalysed reaction is iodide(out) = iodide(in). Its activity is regulated as follows. Common gate kinetics are down-regulated by intracellular ATP. Inhibited by AK-42, a derivative of meclofenamate. Inhibited by Cd(2+). Inhibited by Zn(2+) and PKC activation. Inhibited at acidic pH. CCLN2:HEPACAM channel conductance is up-regulated upon hypo-osmolarity. Its function is as follows. Voltage-gated and osmosensitive chloride channel. Forms a homodimeric channel where each subunit has its own ion conduction pathway. Conducts double-barreled currents controlled by two types of gates, two fast glutamate gates that control each subunit independently and a slow common gate that opens and shuts off both subunits simultaneously. Displays inward rectification currents activated upon membrane hyperpolarization and extracellular hypotonicity. Contributes to chloride conductance involved in neuron excitability. In hippocampal neurons, generates a significant part of resting membrane conductance and provides an additional chloride efflux pathway to prevent chloride accumulation in dendrites upon GABA receptor activation. In glia, associates with the auxiliary subunit HEPACAM/GlialCAM at astrocytic processes and myelinated fiber tracts where it may regulate transcellular chloride flux buffering extracellular chloride and potassium concentrations. Regulates aldosterone production in adrenal glands. The opening of CLCN2 channels at hyperpolarized membrane potentials in the glomerulosa causes cell membrane depolarization, activation of voltage-gated calcium channels and increased expression of aldosterone synthase, the rate-limiting enzyme for aldosterone biosynthesis. Contributes to chloride conductance in retinal pigment epithelium involved in phagocytosis of shed photoreceptor outer segments and photoreceptor renewal. Conducts chloride currents at the basolateral membrane of epithelial cells with a role in chloride reabsorption rather than secretion. Permeable to small monovalent anions with chloride &gt; thiocyanate &gt; bromide &gt; nitrate &gt; iodide ion selectivity. This is Chloride channel protein 2 (CLCN2) from Oryctolagus cuniculus (Rabbit).